The following is a 331-amino-acid chain: MGTPQKDVIIKSDAPDTLLLEKHADYIASYGSKKDDYEYCMSEYLRMSGIYWGLTVMDLMGQLHRMNREEILTFIKSCQHECGGISASIGHDPHLLYTLSAVQILTLYDSINVIDINKVVEYVQSLQKEDGSFAGDIWGEIDTRFSFCAVATLALLGKLDAINVEKAIEFVLSCMNFDGGFGCRPGSESHAGQIYCCTGFLAITSQLHQVNSDLLGWWLCERQLPSGGLNGRPEKLPDVCYSWWVLASLKIIGRLHWIDREKLRSFILACQDEETGGFADRPGDMVDPFHTLFGIAGLSLLGEEQIKPVSPVFCMPEEVLRRVNVQPELVS.

The residue at position 2 (glycine 2) is an N-acetylglycine. A Phosphothreonine modification is found at threonine 3. PFTB repeat units lie at residues 20-61 (LEKH…DLMG), 68-109 (REEI…TLYD), 116-157 (INKV…ALLG), 164-205 (VEKA…AITS), 212-253 (SDLL…KIIG), and 260-302 (REKL…SLLG). 190–192 (HAG) is a geranylgeranyl diphosphate binding site. Residues aspartate 238 and cysteine 240 each contribute to the Zn(2+) site. A geranylgeranyl diphosphate-binding site is contributed by 241 to 244 (YSWW). Zn(2+) is bound at residue histidine 290.

This sequence belongs to the protein prenyltransferase subunit beta family. In terms of assembly, heterotrimer composed of RABGGTA, RABGGTB and CHM; within this trimer, RABGGTA and RABGGTB form the catalytic component B, while CHM (component A) mediates peptide substrate binding. The Rab GGTase dimer (RGGT) interacts with CHM (component A) prior to Rab protein binding; the association is stabilized by geranylgeranyl pyrophosphate (GGpp). The CHM:RGGT:Rab complex is destabilized by GGpp. Interaction of RABGGTB with prenylated PTP4A2 precludes its association with RABGGTA and inhibits enzyme activity. Interacts with CHODL. Interacts with non-phosphorylated form of RAB8A; phosphorylation of RAB8A at 'Thr-72' disrupts this interaction. The cofactor is Zn(2+).

It catalyses the reaction geranylgeranyl diphosphate + L-cysteinyl-[protein] = S-geranylgeranyl-L-cysteinyl-[protein] + diphosphate. The enzymatic reaction requires the aid of a Rab escort protein (also called component A). Functionally, catalyzes the transfer of a geranylgeranyl moiety from geranylgeranyl diphosphate to both cysteines of Rab proteins with the C-terminal sequence -XXCC, -XCXC and -CCXX, such as RAB1A, RAB3A, RAB5A and RAB7A. The protein is Geranylgeranyl transferase type-2 subunit beta (RABGGTB) of Bos taurus (Bovine).